The primary structure comprises 325 residues: MQSKHRKLLLRCLLVLPLILLVDYCGLLTHLHELNFERHFHYPLNDDTGSGSASSGLDKFAYLRVPSFTAEVPVDQPARLTMLIKSAVGNSRRREAIRRTWGYEGRFSDVHLRRVFLLGTAEDSEKDVAWESREHGDILQAEFTDAYFNNTLKTMLGMRWASDQFNRSEFYLFVDDDYYVSAKNVLKFLGRGRQSHQPELLFAGHVFQTSPLRHKFSKWYVSLEEYPFDRWPPYVTAGAFILSQKALRQLYAASVHLPLFRFDDVYLGIVALKAGISLQHCDDFRFHRPAYKGPDSYSSVIASHEFGDPEEMTRVWNECRSANYA.

At 1–7 (MQSKHRK) the chain is on the cytoplasmic side. Residues 8–28 (LLLRCLLVLPLILLVDYCGLL) traverse the membrane as a helical; Signal-anchor for type II membrane protein segment. The Lumenal segment spans residues 29-325 (THLHELNFER…WNECRSANYA (297 aa)). Residues Asn149 and Asn166 are each glycosylated (N-linked (GlcNAc...) asparagine).

Belongs to the glycosyltransferase 31 family.

Its subcellular location is the golgi apparatus membrane. It catalyses the reaction a ganglioside GM2 (d18:1(4E)) + UDP-alpha-D-galactose = a ganglioside GM1 (d18:1(4E)) + UDP + H(+). Neurogenic protein essential for the development and maintenance of epithelial structure. Required in the germline for establishing the follicular epithelium and for determining the dorsal-ventral polarity. Collaborates with Notch on the apical surface of follicle cells to mediate germline-follicle cell adhesion. Brn has a role in chorion formation. This Drosophila melanogaster (Fruit fly) protein is Beta-1,3-galactosyltransferase brn (brn).